A 332-amino-acid polypeptide reads, in one-letter code: MIGSNESSTEGPIPTSYLSFLAYLLGEWTGVEHTEDYLSYGAYLSWVLFPLAIVFILPVAIFFFCFNTSLLLLHIYKRRKNGFNEGHSGDVWYGAKEMLVNLWDGHGRVWHGYELHGDENIPEVPALIVFYHGASPVDYLYFMARLLIRRKRYCHVVADHFVFRLPGLKMFIEVLGVMHGPKEVCVSALKKGYLLAISPGGVREALFSDETYAIMWGNRKGFAQVAIDAKVPIIPMFTQNVREGIRTLGGIKIFRKLYERIRLPIVPMYGWFPVKFRTFIGEPIPYDPNITAEELTAKTKAALQALITKHQKIPGNILRALMERFQTRQKED.

The Lumenal segment spans residues 1–10 (MIGSNESSTE). N-linked (GlcNAc...) asparagine glycosylation is present at asparagine 5. The helical transmembrane segment at 11-31 (GPIPTSYLSFLAYLLGEWTGV) threads the bilayer. The Cytoplasmic portion of the chain corresponds to 32–45 (EHTEDYLSYGAYLS). The chain crosses the membrane as a helical span at residues 46–66 (WVLFPLAIVFILPVAIFFFCF). At 67 to 332 (NTSLLLLHIY…ERFQTRQKED (266 aa)) the chain is on the lumenal side. Histidine 132 is an active-site residue. N-linked (GlcNAc...) asparagine glycosylation is present at asparagine 289.

This sequence belongs to the diacylglycerol acyltransferase family. Highly divergent.

The protein resides in the endoplasmic reticulum membrane. It carries out the reaction a 1,2-diacylglycerol + a 1,2-diacyl-sn-glycero-3-phosphocholine = a triacylglycerol + a 1-acyl-sn-glycero-3-phosphocholine. It catalyses the reaction a 1-O-alkyl-2-acyl-sn-glycero-3-phosphocholine + a 1,2-diacylglycerol = a 1-O-alkyl-sn-glycero-3-phosphocholine + a triacylglycerol. The enzyme catalyses a 2-acylglycerol + an acyl-CoA = a 1,2-diacylglycerol + CoA. The catalysed reaction is an acyl-CoA + a 1,2-diacyl-sn-glycerol = a triacyl-sn-glycerol + CoA. It carries out the reaction 2-(9Z-octadecenoyl)-glycerol + (9Z)-octadecenoyl-CoA = 1,2-di-(9Z-octadecenoyl)-glycerol + CoA. It catalyses the reaction 1,2-di-(9Z-octadecenoyl)-sn-glycerol + (9Z)-octadecenoyl-CoA = 1,2,3-tri-(9Z-octadecenoyl)-glycerol + CoA. Its function is as follows. Catalytic subunit of the alternative triglyceride biosynthesis pathway, which mediates formation of triacylglycerol from diacylglycerol and membrane phospholipids. Synthesizes triacylglycerol at the expense of membrane phospholipids, such as phosphatidylcholine (PC) and its ether-linked form (ePC), thereby altering the composition of membranes. The alternative triglyceride biosynthesis pathway is probably required to provide the energy required for rapid growth when fuel sources are limiting. It maintains mitochondrial function during periods of extracellular lipid starvation. Can also use acyl-CoA as donor: acts as a acyl-CoA:monoacylglycerol acyltransferase (MGAT), but also shows acyl-CoA:diacylglycerol acyltransferase (DGAT) activity. In Gallus gallus (Chicken), this protein is DGAT1/2-independent enzyme synthesizing storage lipids (TMEM68).